Consider the following 78-residue polypeptide: Xibalbin-13 1 (78 aa).

The first 27 residues, 1-27, serve as a signal peptide directing secretion; sequence MKEANTRRYIHLCLVVVLVSTIITTEA. The propeptide occupies 28 to 31; it reads EDDR. 4 disulfide bridges follow: cysteine 34–cysteine 49, cysteine 41–cysteine 54, cysteine 48–cysteine 65, and cysteine 56–cysteine 63. Serine 76 carries the serine amide modification.

This sequence belongs to the xibalbin-13 family. In terms of tissue distribution, expressed by the venom gland.

The protein resides in the secreted. Probable neurotoxin. Strongly inhibits voltage-gated potassium channels (Kv1.1/KCNA1, Kv1.2/KCNA2, Kv1.3/KCNA3, and Kv1.6/KCNA6) and mildly inhibits sodium channels (Nav1.2/SCN2A, Nav1.4/SCN4A, Nav1.5/SCN5A, Nav1.6/SCN8A, and BgNav). Induces activation of protein kinase A type II (PKA-II) and MAP kinase Erk1/2 in primary nociceptive and non-nociceptive sensory neurons. Does not show cytotoxic activity. Does not have an impact on Ca2+, cAMP, and NO signaling in the cell types analyzed. Does not interfere with the adhesion of leukocytes to endothelial cells. The protein is Xibalbin-13 1 of Xibalbanus tulumensis (Blind cave remipede).